Consider the following 747-residue polypeptide: Polyribonucleotide nucleotidyltransferase (747 aa).

The Mg(2+) site is built by Asp487 and Asp493. The KH domain occupies 554 to 613; it reads PSTTTIKIDKDKIRDIIGPGGKIIKEICETSGAKIDISDDGTVSVYAADRDKLKIASDKI. Residues 623-691 form the S1 motif domain; the sequence is GEIFNGTVTK…NKGKAKLTIK (69 aa). The disordered stretch occupies residues 694 to 716; that stretch reads DKDKSLNNPKPQNSINNAKENSE. Residues 699–712 show a composition bias toward polar residues; the sequence is LNNPKPQNSINNAK.

Belongs to the polyribonucleotide nucleotidyltransferase family. Mg(2+) serves as cofactor.

It localises to the cytoplasm. The enzyme catalyses RNA(n+1) + phosphate = RNA(n) + a ribonucleoside 5'-diphosphate. Involved in mRNA degradation. Catalyzes the phosphorolysis of single-stranded polyribonucleotides processively in the 3'- to 5'-direction. In Rickettsia canadensis (strain McKiel), this protein is Polyribonucleotide nucleotidyltransferase.